We begin with the raw amino-acid sequence, 89 residues long: MYSLEISLRYSPFPLSIQKKEYEDIKRIYDEIKDSMNSDNQNSPLIELSCEKVQDKLITVLAKEVISVQIYEKSAVAGGSKRPGFSLDI.

The protein belongs to the UPF0367 family.

This Prochlorococcus marinus subsp. pastoris (strain CCMP1986 / NIES-2087 / MED4) protein is UPF0367 protein PMM0124.